A 280-amino-acid polypeptide reads, in one-letter code: UPF0273 protein SSO1861 (280 aa).

Residues 2–246 (KRVKTYIPGL…YLKISNWSVS (245 aa)) form the KaiC domain. 29 to 36 (GGPGTGKS) contributes to the ATP binding site.

The protein belongs to the UPF0273 family.

This chain is UPF0273 protein SSO1861, found in Saccharolobus solfataricus (strain ATCC 35092 / DSM 1617 / JCM 11322 / P2) (Sulfolobus solfataricus).